An 89-amino-acid chain; its full sequence is Large ribosomal subunit protein bL27 (89 aa).

This sequence belongs to the bacterial ribosomal protein bL27 family.

The protein is Large ribosomal subunit protein bL27 of Bacteroides fragilis (strain ATCC 25285 / DSM 2151 / CCUG 4856 / JCM 11019 / LMG 10263 / NCTC 9343 / Onslow / VPI 2553 / EN-2).